Consider the following 291-residue polypeptide: Elongation factor Ts (291 aa).

The interval 82-85 (TDFC) is involved in Mg(2+) ion dislocation from EF-Tu.

It belongs to the EF-Ts family.

Its subcellular location is the cytoplasm. Associates with the EF-Tu.GDP complex and induces the exchange of GDP to GTP. It remains bound to the aminoacyl-tRNA.EF-Tu.GTP complex up to the GTP hydrolysis stage on the ribosome. The protein is Elongation factor Ts of Methylobacillus flagellatus (strain ATCC 51484 / DSM 6875 / VKM B-1610 / KT).